Reading from the N-terminus, the 254-residue chain is Bidirectional sugar transporter SWEET6b (254 aa).

Topologically, residues 1 to 9 (MISPDAARN) are extracellular. The helical transmembrane segment at 10–30 (VVGIIGNVISFGLFLAPVPTF) threads the bilayer. In terms of domain architecture, MtN3/slv 1 spans 10–98 (VVGIIGNVIS…IFFLYSPNKK (89 aa)). Over 31–45 (WRICKRKDVEEFKAD) the chain is Cytoplasmic. A helical transmembrane segment spans residues 46 to 66 (PYLATLLNCMLWVFYGIPIVH). At 67-69 (PNS) the chain is on the extracellular side. The chain crosses the membrane as a helical span at residues 70–90 (ILVVTINGIGLVVEGTYLFIF). At 91-101 (FLYSPNKKRLR) the chain is on the cytoplasmic side. The helical transmembrane segment at 102–122 (MLAVLGVELVFMLAVILGVLL) threads the bilayer. At 123 to 131 (GAHTHKKRS) the chain is on the extracellular side. Residues 132 to 152 (MIVGILCVFFGSIMYFSPLTI) traverse the membrane as a helical segment. In terms of domain architecture, MtN3/slv 2 spans 133–216 (IVGILCVFFG…LILYACYYRT (84 aa)). Residues 153 to 165 (MGKVIKTKSVEYM) lie on the Cytoplasmic side of the membrane. Residues 166 to 186 (PFFLSLVCFLNGVCWTAYALI) form a helical membrane-spanning segment. Topologically, residues 187 to 189 (RFD) are extracellular. The helical transmembrane segment at 190–210 (IYVTIPNSLGAIFGAIQLILY) threads the bilayer. Residues 211–254 (ACYYRTTPKKTKAAKDVEMPSVISGPGAAATASGGSVVSVTVER) are Cytoplasmic-facing.

It belongs to the SWEET sugar transporter family. Forms homooligomers and/or heterooligomers.

It is found in the cell membrane. Mediates both low-affinity uptake and efflux of sugar across the plasma membrane. The chain is Bidirectional sugar transporter SWEET6b (SWEET6B) from Oryza sativa subsp. indica (Rice).